A 138-amino-acid chain; its full sequence is Transcription antitermination protein NusB (138 aa).

Belongs to the NusB family.

In terms of biological role, involved in transcription antitermination. Required for transcription of ribosomal RNA (rRNA) genes. Binds specifically to the boxA antiterminator sequence of the ribosomal RNA (rrn) operons. In Desulforudis audaxviator (strain MP104C), this protein is Transcription antitermination protein NusB.